A 150-amino-acid chain; its full sequence is Transcriptional repressor NrdR (150 aa).

A zinc finger lies at 3 to 34 (CPFCNFEESKVVDSRATDDNTTIRRRRECLNC). An ATP-cone domain is found at 49–139 (VLVVKKDLAR…VYRQFKDINT (91 aa)).

Belongs to the NrdR family. Zn(2+) is required as a cofactor.

In terms of biological role, negatively regulates transcription of bacterial ribonucleotide reductase nrd genes and operons by binding to NrdR-boxes. The protein is Transcriptional repressor NrdR of Clostridium botulinum (strain Eklund 17B / Type B).